The sequence spans 166 residues: 6,7-dimethyl-8-ribityllumazine synthase (166 aa).

Residues Phe-24, 58–60 (ALE), and 82–84 (AVV) contribute to the 5-amino-6-(D-ribitylamino)uracil site. 87–88 (ET) contributes to the (2S)-2-hydroxy-3-oxobutyl phosphate binding site. Catalysis depends on His-90, which acts as the Proton donor. Asn-115 provides a ligand contact to 5-amino-6-(D-ribitylamino)uracil. Arg-129 contributes to the (2S)-2-hydroxy-3-oxobutyl phosphate binding site.

Belongs to the DMRL synthase family.

The enzyme catalyses (2S)-2-hydroxy-3-oxobutyl phosphate + 5-amino-6-(D-ribitylamino)uracil = 6,7-dimethyl-8-(1-D-ribityl)lumazine + phosphate + 2 H2O + H(+). It participates in cofactor biosynthesis; riboflavin biosynthesis; riboflavin from 2-hydroxy-3-oxobutyl phosphate and 5-amino-6-(D-ribitylamino)uracil: step 1/2. Functionally, catalyzes the formation of 6,7-dimethyl-8-ribityllumazine by condensation of 5-amino-6-(D-ribitylamino)uracil with 3,4-dihydroxy-2-butanone 4-phosphate. This is the penultimate step in the biosynthesis of riboflavin. This Cupriavidus necator (strain ATCC 17699 / DSM 428 / KCTC 22496 / NCIMB 10442 / H16 / Stanier 337) (Ralstonia eutropha) protein is 6,7-dimethyl-8-ribityllumazine synthase.